Consider the following 116-residue polypeptide: Anti-sigma F factor antagonist (116 aa).

An STAS domain is found at 3–113 (LAIDLEVKKD…ESEQYALHRL (111 aa)). Phosphoserine is present on Ser58.

Belongs to the anti-sigma-factor antagonist family. Post-translationally, phosphorylated by SpoIIAB on a serine residue.

Its function is as follows. In the phosphorylated form it could act as an anti-anti-sigma factor that counteracts SpoIIAB and thus releases sigma f from inhibition. The chain is Anti-sigma F factor antagonist (spoIIAA) from Heyndrickxia coagulans (Weizmannia coagulans).